Consider the following 377-residue polypeptide: DnaJ-related protein SCJ1 (377 aa).

A signal peptide spans 1–21; the sequence is MIPKLYIHLILSLLLLPLILA. The J domain occupies 23–88; that stretch reads DYYAILEIDK…EKKKIYDQFG (66 aa). Residues 156 to 237 form a CR-type zinc finger; the sequence is GSSIEFTLNL…CHGKKVTKKN (82 aa). CXXCXGXG motif repeat units lie at residues 169-176, 185-192, 211-218, and 225-232; these read CDACHGSG, CPDCQGRG, CGRCGGTG, and CKTCHGKK. The short motif at 288-290 is the Cell attachment site element; sequence RGD. The short motif at 374–377 is the Prevents secretion from ER element; sequence KDEL.

The protein localises to the endoplasmic reticulum lumen. Regulates protein folding in the endoplasmic reticulum lumen. Probably acts as a J-protein for the Hsp70-type chaperone KAR2 by stimulating its ATP-dependent reaction cycle and initiating folding reactions. Also involved in the endoplasmic reticulum-associated degradation (ERAD) process. Cooperates with KAR2 and another J-protein JEM1 to facilitate the export of ERAD substrates to the cytoplasm by maintaining them in a translocation-competent state and preventing their aggregation in the endoplasmic reticulum lumen. The protein is DnaJ-related protein SCJ1 (SCJ1) of Saccharomyces cerevisiae (strain ATCC 204508 / S288c) (Baker's yeast).